The chain runs to 332 residues: UPF0194 membrane protein YbhG (332 aa).

Residues 1–16 form the signal peptide; sequence MMKKPVVIGLAVVVLA. A coiled-coil region spans residues 141-210; the sequence is RTISANDLEN…NLQDSTLIAP (70 aa).

Belongs to the UPF0194 family.

It localises to the periplasm. This is UPF0194 membrane protein YbhG (ybhG) from Shigella flexneri.